Here is a 690-residue protein sequence, read N- to C-terminus: Protein SPT2 homolog (690 aa).

An important for interaction with DNA region spans residues 1 to 579; sequence MDFHNILVMA…PGHRPVFRPQ (579 aa). Residues 40-82 adopt a coiled-coil conformation; it reads ESAAVQAFLRRKEEEKRKKELEEKRKKERLLAKRIELKHDRKA. Disordered regions lie at residues 105–167 and 186–619; these read PKKR…APAP and EIKV…QEEI. Positions 186 to 228 are enriched in basic and acidic residues; the sequence is EIKVVKKIEERPRTAEELREREYLERKNKRVETQKKKSEKEVK. Low complexity predominate over residues 229–243; the sequence is SAGISSSSKKATSLK. Basic and acidic residues-rich tracts occupy residues 244 to 259 and 271 to 285; these read ECAD…DKHA and TDKK…EKHS. Polar residues predominate over residues 369–380; that stretch reads HETNSSAKRPSS. Residues 383-396 show a composition bias toward gly residues; that stretch reads GKGGSGHPAGGSSA. Low complexity predominate over residues 397 to 442; it reads GPGRSSSNSGTGPGRPGSVSSPGPGRQGSSSAAGPGRPSSSSSLGP. Composition is skewed to gly residues over residues 443 to 457, 465 to 477, and 489 to 521; these read GRLG…GRPG, GRPG…GPGR, and LGSG…GPGR. Polar residues predominate over residues 545–565; the sequence is VSETISSKNLVTRPSNGQING. The important for interaction with histones stretch occupies residues 580 to 690; it reads GIGRPPVGYK…KRQSKKLRTR (111 aa). Positions 593–617 are enriched in acidic residues; the sequence is DDDDDDDEYDSEMDDFIEDEGEPQE. Residues 650 to 690 are a coiled coil; the sequence is REQQKEEARSLRLGVQEDLEELRREEEELKRKRQSKKLRTR.

Belongs to the SPT2 family. As to quaternary structure, interacts with POLR1A. Interacts with histones. Interacts with a heterotetrameric complex formed by histone H3 and H4, especially when the histone tetramer is not bound to DNA.

The protein localises to the nucleus. It is found in the nucleolus. Histone chaperone that stabilizes pre-existing histone tetramers and regulates replication-independent histone exchange on chromatin. Required for normal chromatin refolding in the coding region of transcribed genes, and for the suppression of spurious transcription. Binds DNA and histones and promotes nucleosome assembly (in vitro). Modulates RNA polymerase 1-mediated transcription. Required for optimal growth in the presence of the DNA damaging agents actinomycin D or mitomycin C (in vitro). Facilitates formation of tetrameric histone complexes containing histone H3 and H4. Modulates RNA polymerase 1-mediated transcription. Binds DNA, with a preference for branched DNA species, such as Y-form DNA and Holliday junction DNA. This chain is Protein SPT2 homolog (SPTY2D1), found in Gallus gallus (Chicken).